A 761-amino-acid polypeptide reads, in one-letter code: uncharacterized protein (761 aa).

At M1 the chain carries N-acetylmethionine. 3 disordered regions span residues 1–82 (MEHQ…SSSS), 229–320 (SNII…SALA), and 590–640 (FNRA…PEQQ). Polar residues predominate over residues 13 to 27 (NSGSNRVTVYNGTTL). The span at 28-45 (PTMPKSATPTSSSTTVTT) shows a compositional bias: low complexity. 4 stretches are compositionally biased toward polar residues: residues 244–259 (TPVS…SSPE), 266–276 (NTTSSSSTSDH), 590–604 (FNRA…STDD), and 627–640 (SKNS…PEQQ).

Phosphorylated by CDC28.

This is an uncharacterized protein from Saccharomyces cerevisiae (strain ATCC 204508 / S288c) (Baker's yeast).